Consider the following 33-residue polypeptide: MNIELITQLASLILIVASGPIVIGLLSLKQGNL.

A helical membrane pass occupies residues 5–25 (LITQLASLILIVASGPIVIGL).

It belongs to the Psb30/Ycf12 family. As to quaternary structure, PSII is composed of 1 copy each of membrane proteins PsbA, PsbB, PsbC, PsbD, PsbE, PsbF, PsbH, PsbI, PsbJ, PsbK, PsbL, PsbM, PsbT, PsbX, PsbY, PsbZ, Psb30/Ycf12, peripheral proteins of the oxygen-evolving complex and a large number of cofactors. It forms dimeric complexes.

Its subcellular location is the plastid. The protein localises to the chloroplast thylakoid membrane. In terms of biological role, a core subunit of photosystem II (PSII), probably helps stabilize the reaction center. This is Photosystem II reaction center protein Psb30 from Lepocinclis buetschlii.